We begin with the raw amino-acid sequence, 200 residues long: Large ribosomal subunit protein uL4 (200 aa).

The interval 44–71 (AQKTRAEVSGGGKKPWRQKGTGRARAGS) is disordered.

This sequence belongs to the universal ribosomal protein uL4 family. Part of the 50S ribosomal subunit.

Its function is as follows. One of the primary rRNA binding proteins, this protein initially binds near the 5'-end of the 23S rRNA. It is important during the early stages of 50S assembly. It makes multiple contacts with different domains of the 23S rRNA in the assembled 50S subunit and ribosome. Functionally, forms part of the polypeptide exit tunnel. In Psychrobacter sp. (strain PRwf-1), this protein is Large ribosomal subunit protein uL4.